A 198-amino-acid polypeptide reads, in one-letter code: Protein GrpE (198 aa).

The segment covering 1–18 has biased composition (basic and acidic residues); the sequence is MSEQEQKVEIPEVEKQEE. Positions 1-33 are disordered; the sequence is MSEQEQKVEIPEVEKQEEVVVEETQQAEHSQEF.

This sequence belongs to the GrpE family. Homodimer.

The protein resides in the cytoplasm. Participates actively in the response to hyperosmotic and heat shock by preventing the aggregation of stress-denatured proteins, in association with DnaK and GrpE. It is the nucleotide exchange factor for DnaK and may function as a thermosensor. Unfolded proteins bind initially to DnaJ; upon interaction with the DnaJ-bound protein, DnaK hydrolyzes its bound ATP, resulting in the formation of a stable complex. GrpE releases ADP from DnaK; ATP binding to DnaK triggers the release of the substrate protein, thus completing the reaction cycle. Several rounds of ATP-dependent interactions between DnaJ, DnaK and GrpE are required for fully efficient folding. This is Protein GrpE from Haemophilus influenzae (strain ATCC 51907 / DSM 11121 / KW20 / Rd).